Consider the following 439-residue polypeptide: Ribosomal protein uS12 methylthiotransferase RimO (439 aa).

In terms of domain architecture, MTTase N-terminal spans histidine 3–proline 113. Residues cysteine 12, cysteine 48, cysteine 77, cysteine 144, cysteine 148, and cysteine 151 each contribute to the [4Fe-4S] cluster site. In terms of domain architecture, Radical SAM core spans leucine 130–asparagine 367. Residues lysine 370 to tyrosine 436 enclose the TRAM domain.

Belongs to the methylthiotransferase family. RimO subfamily. The cofactor is [4Fe-4S] cluster.

It is found in the cytoplasm. It catalyses the reaction L-aspartate(89)-[ribosomal protein uS12]-hydrogen + (sulfur carrier)-SH + AH2 + 2 S-adenosyl-L-methionine = 3-methylsulfanyl-L-aspartate(89)-[ribosomal protein uS12]-hydrogen + (sulfur carrier)-H + 5'-deoxyadenosine + L-methionine + A + S-adenosyl-L-homocysteine + 2 H(+). Its function is as follows. Catalyzes the methylthiolation of an aspartic acid residue of ribosomal protein uS12. This chain is Ribosomal protein uS12 methylthiotransferase RimO, found in Legionella pneumophila (strain Paris).